Consider the following 234-residue polypeptide: Leucyl/phenylalanyl-tRNA--protein transferase (234 aa).

It belongs to the L/F-transferase family.

The protein localises to the cytoplasm. The enzyme catalyses N-terminal L-lysyl-[protein] + L-leucyl-tRNA(Leu) = N-terminal L-leucyl-L-lysyl-[protein] + tRNA(Leu) + H(+). It catalyses the reaction N-terminal L-arginyl-[protein] + L-leucyl-tRNA(Leu) = N-terminal L-leucyl-L-arginyl-[protein] + tRNA(Leu) + H(+). The catalysed reaction is L-phenylalanyl-tRNA(Phe) + an N-terminal L-alpha-aminoacyl-[protein] = an N-terminal L-phenylalanyl-L-alpha-aminoacyl-[protein] + tRNA(Phe). Functions in the N-end rule pathway of protein degradation where it conjugates Leu, Phe and, less efficiently, Met from aminoacyl-tRNAs to the N-termini of proteins containing an N-terminal arginine or lysine. The sequence is that of Leucyl/phenylalanyl-tRNA--protein transferase from Nitratidesulfovibrio vulgaris (strain ATCC 29579 / DSM 644 / CCUG 34227 / NCIMB 8303 / VKM B-1760 / Hildenborough) (Desulfovibrio vulgaris).